The chain runs to 160 residues: Cytochrome b6-f complex subunit 4 (160 aa).

A run of 3 helical transmembrane segments spans residues 36-56, 95-115, and 131-151; these read LLYV…GLAI, LLGI…PFIE, and AIFL…TFPI.

It belongs to the cytochrome b family. PetD subfamily. In terms of assembly, the 4 large subunits of the cytochrome b6-f complex are cytochrome b6, subunit IV (17 kDa polypeptide, PetD), cytochrome f and the Rieske protein, while the 4 small subunits are PetG, PetL, PetM and PetN. The complex functions as a dimer.

The protein localises to the cellular thylakoid membrane. In terms of biological role, component of the cytochrome b6-f complex, which mediates electron transfer between photosystem II (PSII) and photosystem I (PSI), cyclic electron flow around PSI, and state transitions. This chain is Cytochrome b6-f complex subunit 4, found in Microcystis aeruginosa (strain NIES-843 / IAM M-2473).